The primary structure comprises 258 residues: Hemin import ATP-binding protein HmuV (258 aa).

The ABC transporter domain maps to leucine 2–proline 242. Glycine 34–serine 41 contributes to the ATP binding site.

Belongs to the ABC transporter superfamily. Heme (hemin) importer (TC 3.A.1.14.5) family. The complex is composed of two ATP-binding proteins (HmuV), two transmembrane proteins (HmuU) and a solute-binding protein (HmuT).

The protein resides in the cell inner membrane. Part of the ABC transporter complex HmuTUV involved in hemin import. Responsible for energy coupling to the transport system. The sequence is that of Hemin import ATP-binding protein HmuV from Hydrogenovibrio crunogenus (strain DSM 25203 / XCL-2) (Thiomicrospira crunogena).